The primary structure comprises 238 residues: uncharacterized protein (238 aa).

A disordered region spans residues 1–20; the sequence is MPNLHSLPLGTRPENAIRNN.

It belongs to the PEP2 family.

This is an uncharacterized protein from Emericella nidulans (strain FGSC A4 / ATCC 38163 / CBS 112.46 / NRRL 194 / M139) (Aspergillus nidulans).